The sequence spans 428 residues: GTPase Obg (428 aa).

Positions 1–158 (MFVDQVKIYV…RDVILELKVL (158 aa)) constitute an Obg domain. In terms of domain architecture, OBG-type G spans 159-329 (ADVGLVGFPS…LLFEVANLIE (171 aa)). GTP is bound by residues 165 to 172 (GFPSVGKS), 190 to 194 (FTTIV), 212 to 215 (DLPG), 282 to 285 (NKMD), and 310 to 312 (SAV). Mg(2+)-binding residues include serine 172 and threonine 192. The OCT domain occupies 350 to 428 (KFETEGVKFD…ILEYEFEFID (79 aa)).

The protein belongs to the TRAFAC class OBG-HflX-like GTPase superfamily. OBG GTPase family. Monomer. Requires Mg(2+) as cofactor.

The protein localises to the cytoplasm. Its function is as follows. An essential GTPase which binds GTP, GDP and possibly (p)ppGpp with moderate affinity, with high nucleotide exchange rates and a fairly low GTP hydrolysis rate. Plays a role in control of the cell cycle, stress response, ribosome biogenesis and in those bacteria that undergo differentiation, in morphogenesis control. This chain is GTPase Obg, found in Bacillus thuringiensis (strain Al Hakam).